Consider the following 471-residue polypeptide: GDP-mannose transporter (471 aa).

The span at 1-13 shows a compositional bias: polar residues; it reads MSSGSRSFFTPQE. A disordered region spans residues 1–52; that stretch reads MSSGSRSFFTPQETRLELPQGAAHQTPDITRPASPSENDRAPFLNGGPSDAR. Topologically, residues 1–70 are cytoplasmic; the sequence is MSSGSRSFFT…ALRNDSEKPA (70 aa). Residues 71–91 traverse the membrane as a helical segment; the sequence is VGIMALAPILCYCAASITMTV. Residues 92-101 lie on the Lumenal side of the membrane; that stretch reads VNKFTVSGRG. The helical transmembrane segment at 102–122 threads the bilayer; it reads FNMNLLVLLIQSTVGVTCVWI. Residues 123–139 are Cytoplasmic-facing; sequence AERAGLIQLRGLNAKDA. Residues 140-160 form a helical membrane-spanning segment; that stretch reads WNWMPLSIMLVFVIWTGSKAL. Residues 161-166 lie on the Lumenal side of the membrane; it reads QYLNIS. A glycan (N-linked (GlcNAc...) asparagine) is linked at asparagine 164. Residues 167 to 187 traverse the membrane as a helical segment; the sequence is VYTIFKNLTIILIAYGEVMWF. Over 188–193 the chain is Cytoplasmic; sequence GGRVTR. Residues 194-214 form a helical membrane-spanning segment; it reads IVLCSFLFMVLSSVIAAWSDI. At 215-279 the chain is on the lumenal side; sequence SNVFAIGNLS…DVIEGFQGYG (65 aa). Asparagine 222 carries N-linked (GlcNAc...) asparagine glycosylation. Residues 280–300 form a helical membrane-spanning segment; that stretch reads LLSSGYVWMALNCICSATYVL. At 301–315 the chain is on the cytoplasmic side; sequence LMRKRIKVTGFKDWD. Residues 316–336 traverse the membrane as a helical segment; it reads TMFYNNFLSIPVLLLMSFLVE. The Lumenal portion of the chain corresponds to 337-354; sequence DWSYANLHKNFPDDKQTK. The chain crosses the membrane as a helical span at residues 355-375; it reads LISAIVFSGACAILISYTTAW. At 376-383 the chain is on the cytoplasmic side; sequence CIRATSST. Residues 384–404 form a helical membrane-spanning segment; the sequence is TYSMVGALNKLPVALSGMVFF. Residues 405–408 are Lumenal-facing; it reads HDPP. A helical membrane pass occupies residues 409–429; the sequence is VTFSSVSAIAVGFFAGLVYAF. The Cytoplasmic segment spans residues 430–471; sequence GKNKQAEAAKLGGHASANGSSSMSGSKDGSSLPMHTFNDRKD. Residues 442–460 show a composition bias toward low complexity; sequence GHASANGSSSMSGSKDGSS. Residues 442 to 471 form a disordered region; the sequence is GHASANGSSSMSGSKDGSSLPMHTFNDRKD.

It belongs to the TPT transporter family. SLC35D subfamily. Homooligomer.

The protein resides in the golgi apparatus membrane. It is found in the cytoplasmic vesicle membrane. The protein localises to the endoplasmic reticulum membrane. Its function is as follows. Involved in the import of GDP-mannose from the cytoplasm into the Golgi lumen. The sequence is that of GDP-mannose transporter (VRG4) from Mycosarcoma maydis (Corn smut fungus).